The chain runs to 410 residues: Peptidase T (410 aa).

H79 contacts Zn(2+). The active site involves D81. Residue D142 coordinates Zn(2+). Catalysis depends on E176, which acts as the Proton acceptor. Zn(2+) is bound by residues E177, D199, and H381.

Belongs to the peptidase M20B family. Zn(2+) serves as cofactor.

It is found in the cytoplasm. It carries out the reaction Release of the N-terminal residue from a tripeptide.. Functionally, cleaves the N-terminal amino acid of tripeptides. The chain is Peptidase T from Bacillus cereus (strain G9842).